The following is a 332-amino-acid chain: Methylthioribose-1-phosphate isomerase (332 aa).

Substrate-binding positions include 44–46 (RGA), Arg87, and Gln192. Asp233 (proton donor) is an active-site residue. 243-244 (NK) contributes to the substrate binding site.

The protein belongs to the eIF-2B alpha/beta/delta subunits family. MtnA subfamily.

It carries out the reaction 5-(methylsulfanyl)-alpha-D-ribose 1-phosphate = 5-(methylsulfanyl)-D-ribulose 1-phosphate. It participates in amino-acid biosynthesis; L-methionine biosynthesis via salvage pathway; L-methionine from S-methyl-5-thio-alpha-D-ribose 1-phosphate: step 1/6. Catalyzes the interconversion of methylthioribose-1-phosphate (MTR-1-P) into methylthioribulose-1-phosphate (MTRu-1-P). The chain is Methylthioribose-1-phosphate isomerase from Dehalococcoides mccartyi (strain ATCC BAA-2100 / JCM 16839 / KCTC 5957 / BAV1).